Consider the following 256-residue polypeptide: Transcription factor bHLH131 (256 aa).

Residues 91 to 140 (VAAKKHSDAERRRRLRINSQFATLRTILPNLVKQDKASVLGETVRYFNEL) enclose the bHLH domain.

In terms of assembly, homodimer.

Its subcellular location is the nucleus. The protein is Transcription factor bHLH131 (BHLH131) of Arabidopsis thaliana (Mouse-ear cress).